We begin with the raw amino-acid sequence, 351 residues long: Nitronate monooxygenase (351 aa).

FMN-binding positions include L21, N69, Q176, G181, G218, and 237–240 (QMGT).

Belongs to the nitronate monooxygenase family. NMO class I subfamily. FMN is required as a cofactor.

It catalyses the reaction 3 propionate 3-nitronate + 3 O2 + H2O = 3 3-oxopropanoate + 2 nitrate + nitrite + H2O2 + 3 H(+). In terms of biological role, nitronate monooxygenase that uses molecular oxygen to catalyze the oxidative denitrification of alkyl nitronates. The toxin propionate 3-nitronate (P3N) is the best substrate (and the presumed physiological substrate), but this enzyme is also active on other primary and secondary nitronates such as propyl-1-nitronate, ethylnitronate, pentyl-1-nitronate, butyl-1-nitronate and propyl-2-nitronate. Is likely involved in the degradation of P3N, that allows P.aeruginosa PAO1 to grow on 3-nitropropionate/P3N as the sole nitrogen source. Also functions in the detoxification of P3N, a metabolic poison produced by plants and fungi as a defense mechanism. Cannot oxidize nitroalkanes such as 3-nitropropionate, nitroethane, 1-nitropropane, 1-nitrobutane, 1-nitropentane, or 2-nitropropane. This chain is Nitronate monooxygenase, found in Pseudomonas aeruginosa (strain ATCC 15692 / DSM 22644 / CIP 104116 / JCM 14847 / LMG 12228 / 1C / PRS 101 / PAO1).